A 260-amino-acid chain; its full sequence is Proteasome subunit alpha (260 aa).

Residues 241–260 (VEAEEVPEKEEDYSELDSNY) are disordered. The span at 242–260 (EAEEVPEKEEDYSELDSNY) shows a compositional bias: acidic residues.

Belongs to the peptidase T1A family. The 20S proteasome core is composed of 14 alpha and 14 beta subunits that assemble into four stacked heptameric rings, resulting in a barrel-shaped structure. The two inner rings, each composed of seven catalytic beta subunits, are sandwiched by two outer rings, each composed of seven alpha subunits. The catalytic chamber with the active sites is on the inside of the barrel. Has a gated structure, the ends of the cylinder being occluded by the N-termini of the alpha-subunits. Is capped at one or both ends by the proteasome regulatory ATPase, PAN.

It is found in the cytoplasm. The formation of the proteasomal ATPase PAN-20S proteasome complex, via the docking of the C-termini of PAN into the intersubunit pockets in the alpha-rings, triggers opening of the gate for substrate entry. Interconversion between the open-gate and close-gate conformations leads to a dynamic regulation of the 20S proteasome proteolysis activity. Its function is as follows. Component of the proteasome core, a large protease complex with broad specificity involved in protein degradation. This chain is Proteasome subunit alpha, found in Thermococcus sibiricus (strain DSM 12597 / MM 739).